The following is a 337-amino-acid chain: Undecaprenyl-phosphate 4-deoxy-4-formamido-L-arabinose transferase (337 aa).

Helical transmembrane passes span leucine 235 to valine 255 and phenylalanine 270 to leucine 290.

It belongs to the glycosyltransferase 2 family.

It localises to the cell inner membrane. It carries out the reaction UDP-4-deoxy-4-formamido-beta-L-arabinose + di-trans,octa-cis-undecaprenyl phosphate = 4-deoxy-4-formamido-alpha-L-arabinopyranosyl di-trans,octa-cis-undecaprenyl phosphate + UDP. The protein operates within glycolipid biosynthesis; 4-amino-4-deoxy-alpha-L-arabinose undecaprenyl phosphate biosynthesis; 4-amino-4-deoxy-alpha-L-arabinose undecaprenyl phosphate from UDP-4-deoxy-4-formamido-beta-L-arabinose and undecaprenyl phosphate: step 1/2. It participates in bacterial outer membrane biogenesis; lipopolysaccharide biosynthesis. In terms of biological role, catalyzes the transfer of 4-deoxy-4-formamido-L-arabinose from UDP to undecaprenyl phosphate. The modified arabinose is attached to lipid A and is required for resistance to polymyxin and cationic antimicrobial peptides. The polypeptide is Undecaprenyl-phosphate 4-deoxy-4-formamido-L-arabinose transferase (Pseudomonas syringae pv. syringae (strain B728a)).